A 275-amino-acid polypeptide reads, in one-letter code: Ribosomal RNA small subunit methyltransferase A (275 aa).

The S-adenosyl-L-methionine site is built by Asn19, Leu21, Gly46, Glu71, Asp94, and Asn117.

It belongs to the class I-like SAM-binding methyltransferase superfamily. rRNA adenine N(6)-methyltransferase family. RsmA subfamily.

It localises to the cytoplasm. The enzyme catalyses adenosine(1518)/adenosine(1519) in 16S rRNA + 4 S-adenosyl-L-methionine = N(6)-dimethyladenosine(1518)/N(6)-dimethyladenosine(1519) in 16S rRNA + 4 S-adenosyl-L-homocysteine + 4 H(+). In terms of biological role, specifically dimethylates two adjacent adenosines (A1518 and A1519) in the loop of a conserved hairpin near the 3'-end of 16S rRNA in the 30S particle. May play a critical role in biogenesis of 30S subunits. The chain is Ribosomal RNA small subunit methyltransferase A from Burkholderia orbicola (strain MC0-3).